The primary structure comprises 214 residues: Probable transaldolase (214 aa).

The Schiff-base intermediate with substrate role is filled by Lys83.

The protein belongs to the transaldolase family. Type 3B subfamily.

The protein localises to the cytoplasm. The catalysed reaction is D-sedoheptulose 7-phosphate + D-glyceraldehyde 3-phosphate = D-erythrose 4-phosphate + beta-D-fructose 6-phosphate. Its pathway is carbohydrate degradation; pentose phosphate pathway; D-glyceraldehyde 3-phosphate and beta-D-fructose 6-phosphate from D-ribose 5-phosphate and D-xylulose 5-phosphate (non-oxidative stage): step 2/3. In terms of biological role, transaldolase is important for the balance of metabolites in the pentose-phosphate pathway. The protein is Probable transaldolase of Leptospira borgpetersenii serovar Hardjo-bovis (strain JB197).